Consider the following 422-residue polypeptide: Kynurenine--oxoglutarate transaminase 1 (422 aa).

Substrate-binding residues include Gly-36 and Asn-185. N6-(pyridoxal phosphate)lysine is present on Lys-247. Residue Arg-398 coordinates substrate.

Belongs to the class-I pyridoxal-phosphate-dependent aminotransferase family. In terms of assembly, homodimer. Pyridoxal 5'-phosphate is required as a cofactor.

It localises to the cytoplasm. Its subcellular location is the cytosol. It catalyses the reaction L-kynurenine + 2-oxoglutarate = kynurenate + L-glutamate + H2O. It carries out the reaction 3-phenylpyruvate + L-glutamine = 2-oxoglutaramate + L-phenylalanine. The catalysed reaction is an S-substituted L-cysteine + H2O = a thiol + pyruvate + NH4(+). The protein operates within amino-acid degradation; L-kynurenine degradation; kynurenate from L-kynurenine: step 1/2. With respect to regulation, inhibited by tryptophan, indole-3-pyruvic acid, 3-indolepropionic acid, DL-indole-3-lactic acid, indole-3-acetic acid (IAC), amino-oxyacetate (AOAA), aminooxy-phenylpropionic acid (AOPP) and Tris. In terms of biological role, catalyzes the irreversible transamination of the L-tryptophan metabolite L-kynurenine to form kynurenic acid (KA), an intermediate in the tryptophan catabolic pathway which is also a broad spectrum antagonist of the three ionotropic excitatory amino acid receptors among others. Also metabolizes the cysteine conjugates of certain halogenated alkenes and alkanes to form reactive metabolites. Catalyzes the beta-elimination of S-conjugates and Se-conjugates of L-(seleno)cysteine, resulting in the cleavage of the C-S or C-Se bond. This chain is Kynurenine--oxoglutarate transaminase 1, found in Homo sapiens (Human).